Consider the following 227-residue polypeptide: Orotidine 5'-phosphate decarboxylase (227 aa).

Substrate is bound by residues Asp-8, Lys-30, 58 to 67, Thr-117, Arg-177, Gln-186, Gly-206, and Arg-207; that span reads DLKVHDIPNT. The Proton donor role is filled by Lys-60.

The protein belongs to the OMP decarboxylase family. Type 1 subfamily. In terms of assembly, homodimer.

The enzyme catalyses orotidine 5'-phosphate + H(+) = UMP + CO2. The protein operates within pyrimidine metabolism; UMP biosynthesis via de novo pathway; UMP from orotate: step 2/2. Functionally, catalyzes the decarboxylation of orotidine 5'-monophosphate (OMP) to uridine 5'-monophosphate (UMP). In Campylobacter fetus subsp. fetus (strain 82-40), this protein is Orotidine 5'-phosphate decarboxylase.